The primary structure comprises 107 residues: U1-lycotoxin-Ls1k (107 aa).

The N-terminal stretch at 1 to 20 is a signal peptide; it reads MMKVLVVVALLVTLISYSSS. Residues 21–41 constitute a propeptide that is removed on maturation; it reads EGIDDLEADELLSLMANEQTR. 4 disulfide bridges follow: Cys-44/Cys-59, Cys-51/Cys-68, Cys-58/Cys-86, and Cys-70/Cys-84.

Belongs to the neurotoxin 19 (CSTX) family. 04 (U1-Lctx) subfamily. As to expression, expressed by the venom gland.

It is found in the secreted. The sequence is that of U1-lycotoxin-Ls1k from Lycosa singoriensis (Wolf spider).